A 314-amino-acid polypeptide reads, in one-letter code: Regulator of microtubule dynamics protein 1 (314 aa).

N6-succinyllysine is present on K165. TPR repeat units follow at residues 168–204 (AICLSDVGDYEGIKAKIANAYIIKEHFEKAIELNPKD) and 222–258 (PWYQRRIAKMLFATPPSSTYEKALSYFHRAEQVDPNF).

Belongs to the RMDN family. Interacts with microtubules.

The protein resides in the cytoplasm. It is found in the cytoskeleton. The protein localises to the spindle. Its subcellular location is the spindle pole. The chain is Regulator of microtubule dynamics protein 1 (RMDN1) from Pongo abelii (Sumatran orangutan).